The following is a 313-amino-acid chain: tRNA dimethylallyltransferase (313 aa).

Residue 11 to 18 (GPTASGKT) coordinates ATP. Residue 13 to 18 (TASGKT) participates in substrate binding. Interaction with substrate tRNA regions lie at residues 36 to 39 (DSRQ) and 160 to 164 (QRLIR).

The protein belongs to the IPP transferase family. Monomer. Mg(2+) is required as a cofactor.

It carries out the reaction adenosine(37) in tRNA + dimethylallyl diphosphate = N(6)-dimethylallyladenosine(37) in tRNA + diphosphate. Catalyzes the transfer of a dimethylallyl group onto the adenine at position 37 in tRNAs that read codons beginning with uridine, leading to the formation of N6-(dimethylallyl)adenosine (i(6)A). The sequence is that of tRNA dimethylallyltransferase from Chlorobaculum parvum (strain DSM 263 / NCIMB 8327) (Chlorobium vibrioforme subsp. thiosulfatophilum).